A 540-amino-acid chain; its full sequence is Chaperonin GroEL (540 aa).

Residues 29–32 (TLGP), 86–90 (DGTTT), Gly-413, and Asp-493 contribute to the ATP site. The segment at 520 to 540 (AEKPEPKPAPGPADPGAGMDF) is disordered.

It belongs to the chaperonin (HSP60) family. In terms of assembly, forms a cylinder of 14 subunits composed of two heptameric rings stacked back-to-back. Interacts with the co-chaperonin GroES.

Its subcellular location is the cytoplasm. It carries out the reaction ATP + H2O + a folded polypeptide = ADP + phosphate + an unfolded polypeptide.. Together with its co-chaperonin GroES, plays an essential role in assisting protein folding. The GroEL-GroES system forms a nano-cage that allows encapsulation of the non-native substrate proteins and provides a physical environment optimized to promote and accelerate protein folding. This chain is Chaperonin GroEL, found in Tropheryma whipplei (strain TW08/27) (Whipple's bacillus).